The primary structure comprises 47 residues: U18-ctenitoxin-Pn1a (47 aa).

Cystine bridges form between C2–C16, C9–C22, C13–C46, C15–C34, and C24–C32.

In terms of tissue distribution, expressed by the venom gland.

It localises to the secreted. Neurotoxin. Causes spastic paralysis and death in mice by intracerebroventricular injection at dose levels of 3 ug per mouse. The polypeptide is U18-ctenitoxin-Pn1a (Phoneutria nigriventer (Brazilian armed spider)).